The following is an 802-amino-acid chain: Endoplasmin (802 aa).

A signal peptide spans 1-21 (MRVLWVLGLCCVLLTFGFVRA). Positions 42–44 (SRT) match the SRT pseudosubstrate motif motif. Asn62 is a glycosylation site (N-linked (GlcNAc...) asparagine). Residue Ser64 is modified to Phosphoserine. Asn107 is a glycosylation site (N-linked (GlcNAc...) asparagine). Residues Asn107, Asp149, and Asn162 each coordinate ATP. Position 168 is an N6-(2-hydroxyisobutyryl)lysine (Lys168). Residue Ser172 is modified to Phosphoserine. Phe199 contacts ATP. Asn217 carries N-linked (GlcNAc...) asparagine glycosylation. A compositionally biased stretch (acidic residues) spans 290-317 (EEPLEEDEAAKEEKEESDDEAAVEEEEE). The segment at 290 to 323 (EEPLEEDEAAKEEKEESDDEAAVEEEEEEKKPKT) is disordered. Phosphoserine is present on residues Ser306 and Ser403. The residue at position 404 (Lys404) is an N6-succinyllysine. Asn445 is a glycosylation site (N-linked (GlcNAc...) asparagine). At Ser447 the chain carries Phosphoserine. Residue Lys479 is modified to N6-acetyllysine. Residues Asn481 and Asn502 are each glycosylated (N-linked (GlcNAc...) asparagine). Lys633 bears the N6-succinyllysine mark. Residues 749–802 (IDPEAQVEEEPEEEPEDTSEDAEDSEQDEGEEMDAGTEEEEEETEKESTEKDEL) form a disordered region. Residues 753–793 (AQVEEEPEEEPEDTSEDAEDSEQDEGEEMDAGTEEEEEETE) show a composition bias toward acidic residues. A Phosphothreonine modification is found at Thr785. The Prevents secretion from ER motif lies at 799–802 (KDEL).

The protein belongs to the heat shock protein 90 family. In terms of assembly, homodimer; disulfide-linked. Component of an EIF2 complex at least composed of CELF1/CUGBP1, CALR, CALR3, EIF2S1, EIF2S2, HSP90B1 and HSPA5. Part of a large chaperone multiprotein complex comprising DNAJB11, HSP90B1, HSPA5, HYOU, PDIA2, PDIA4, PDIA6, PPIB, SDF2L1, UGGT1 and very small amounts of ERP29, but not, or at very low levels, CALR nor CANX. Hyperglycosylated form interacts with OS9; promoting its degradation by the endoplasmic reticulum associated degradation (ERAD). Interacts with AIMP1; regulates its retention in the endoplasmic reticulum. Interacts with CNPY3; this interaction is disrupted in the presence of ATP. Interacts with TLR4, TLR9 and TLR11, but not with TLR3. Interacts with MZB1 in a calcium-dependent manner. Interacts with METTL23. Interacts with IL1B; the interaction facilitates cargo translocation into the ERGIC. Interacts with EIF2AK3. In terms of processing, phosphorylated by CK2. N-glycosylated cotranslationally at Asn-217 by STT3A-containing OST-A complex: this glycosylation is constitutive. In response to various stress, 5 additional facultative sites (Asn-62, Asn-107, Asn-445, Asn-481 and Asn-502) can be glycosylated post-translationally by STT3B-containing OST-B complex, leading to a hyperglycosylated form that is degraded by the ER-associated degradation (ERAD) pathway. In normal conditions, the OST-A complex together with CCDC134 prevent glycosylation at facultative sites during protein folding, thereby preventing hyperglycosylation. Mechanistically, nascent HSP90B1 is tethered during translation to a specialized CCDC134-containing translocon that forms a microenvironment for its folding, in which STT3A associates with the SRT pseudosubstrate motif, and prevents access to facultative glycosylation sites until folding is completed, rendering its facultative sites inaccessible to the OST-B complex.

It is found in the endoplasmic reticulum lumen. The protein localises to the sarcoplasmic reticulum lumen. The protein resides in the melanosome. The catalysed reaction is ATP + H2O = ADP + phosphate + H(+). Functionally, ATP-dependent chaperone involved in the processing of proteins in the endoplasmic reticulum, regulating their transport. Together with MESD, acts as a modulator of the Wnt pathway by promoting the folding of LRP6, a coreceptor of the canonical Wnt pathway. When associated with CNPY3, required for proper folding of Toll-like receptors. Promotes folding and trafficking of TLR4 to the cell surface. May participate in the unfolding of cytosolic leaderless cargos (lacking the secretion signal sequence) such as the interleukin 1/IL-1 to facilitate their translocation into the ERGIC (endoplasmic reticulum-Golgi intermediate compartment) and secretion; the translocation process is mediated by the cargo receptor TMED10. The polypeptide is Endoplasmin (Hsp90b1) (Mus musculus (Mouse)).